The following is a 188-amino-acid chain: MGTIADDILGDLHGRILKTLDQLRTDLSAVRTGRASLHLLDNVRVDYYGTPTPLNQVATMSVPEARLIVVKPWEKSMIPPIEKAIREANLGLNPMSDKDLVRVPIPALTEERRKEIVKQVKHKGEEHKIAVRNVRREAKELIEVAEKDGDISGDDAEKALEKMQKETDDGVKKIDEIVAAKEKDVLQV.

It belongs to the RRF family.

It localises to the cytoplasm. Functionally, responsible for the release of ribosomes from messenger RNA at the termination of protein biosynthesis. May increase the efficiency of translation by recycling ribosomes from one round of translation to another. This Anaeromyxobacter dehalogenans (strain 2CP-C) protein is Ribosome-recycling factor.